The following is a 163-amino-acid chain: Nodulin-13 (163 aa).

The kinetin site is built by glutamine 68 and tyrosine 82. N(6)-dimethylallyladenine contacts are provided by glutamine 68 and tyrosine 82. Trans-zeatin contacts are provided by glutamine 68, tyrosine 82, and tyrosine 133.

This sequence belongs to the BetVI family. In terms of assembly, homodimer. In terms of tissue distribution, expressed in nodules, but not in leaves, stems, flowers and roots. Specifically located in the nodule cortex.

Its function is as follows. May be involved in nodule organogenesis rather in the processes related to nitrogen fixation or interactions with the bacteria. May regulate nodulation by controlling the levels of freely available cytokinins. This chain is Nodulin-13 (N13), found in Medicago truncatula (Barrel medic).